A 481-amino-acid chain; its full sequence is tRNA:m(4)X modification enzyme TRM13 homolog (481 aa).

Ala-2 bears the N-acetylalanine mark. The CHHC U11-48K-type zinc finger occupies Arg-56–Glu-83. Residues Cys-59, His-65, His-75, and Cys-79 each coordinate Zn(2+). Positions Ser-113–His-140 form a coiled coil. Residues Glu-381–Thr-408 are disordered.

It belongs to the methyltransferase TRM13 family.

The catalysed reaction is cytidine(4) in tRNA(Pro) + S-adenosyl-L-methionine = 2'-O-methylcytidine(4) in tRNA(Pro) + S-adenosyl-L-homocysteine + H(+). It carries out the reaction cytidine(4) in tRNA(Gly)(GCC) + S-adenosyl-L-methionine = 2'-O-methylcytidine(4) in tRNA(Gly)(GCC) + S-adenosyl-L-homocysteine + H(+). The enzyme catalyses adenosine(4) in tRNA(His) + S-adenosyl-L-methionine = 2'-O-methyladenosine(4) in tRNA(His) + S-adenosyl-L-homocysteine + H(+). TRNA methylase which 2'-O-methylates cytidine(4) in tRNA(Pro) and tRNA(Gly)(GCC), and adenosine(4) in tRNA(His). In Homo sapiens (Human), this protein is tRNA:m(4)X modification enzyme TRM13 homolog (TRMT13).